A 117-amino-acid polypeptide reads, in one-letter code: uncharacterized protein (117 aa).

This is an uncharacterized protein from Sinorhizobium fredii (strain NBRC 101917 / NGR234).